The chain runs to 443 residues: Glutamyl-tRNA reductase (443 aa).

Residues 49–52, S109, 114–116, and Q120 each bind substrate; these read TCNR and ETQ. The Nucleophile role is filled by C50. 189 to 194 lines the NADP(+) pocket; the sequence is GAGKMS.

This sequence belongs to the glutamyl-tRNA reductase family. Homodimer.

The enzyme catalyses (S)-4-amino-5-oxopentanoate + tRNA(Glu) + NADP(+) = L-glutamyl-tRNA(Glu) + NADPH + H(+). Its pathway is porphyrin-containing compound metabolism; protoporphyrin-IX biosynthesis; 5-aminolevulinate from L-glutamyl-tRNA(Glu): step 1/2. In terms of biological role, catalyzes the NADPH-dependent reduction of glutamyl-tRNA(Glu) to glutamate 1-semialdehyde (GSA). In Heliobacterium mobile (Heliobacillus mobilis), this protein is Glutamyl-tRNA reductase.